Here is a 356-residue protein sequence, read N- to C-terminus: Protein pelota homolog (356 aa).

It belongs to the eukaryotic release factor 1 family. Pelota subfamily. Monomer. A divalent metal cation is required as a cofactor.

Its subcellular location is the cytoplasm. Functionally, may function in recognizing stalled ribosomes, interact with stem-loop structures in stalled mRNA molecules, and effect endonucleolytic cleavage of the mRNA. May play a role in the release non-functional ribosomes and degradation of damaged mRNAs. Has endoribonuclease activity. The chain is Protein pelota homolog from Aeropyrum pernix (strain ATCC 700893 / DSM 11879 / JCM 9820 / NBRC 100138 / K1).